A 497-amino-acid polypeptide reads, in one-letter code: Probable cytosol aminopeptidase (497 aa).

The Mn(2+) site is built by Lys-263 and Asp-268. Lys-275 is an active-site residue. Positions 286, 345, and 347 each coordinate Mn(2+). The active site involves Arg-349.

It belongs to the peptidase M17 family. The cofactor is Mn(2+).

The protein resides in the cytoplasm. It catalyses the reaction Release of an N-terminal amino acid, Xaa-|-Yaa-, in which Xaa is preferably Leu, but may be other amino acids including Pro although not Arg or Lys, and Yaa may be Pro. Amino acid amides and methyl esters are also readily hydrolyzed, but rates on arylamides are exceedingly low.. The enzyme catalyses Release of an N-terminal amino acid, preferentially leucine, but not glutamic or aspartic acids.. In terms of biological role, presumably involved in the processing and regular turnover of intracellular proteins. Catalyzes the removal of unsubstituted N-terminal amino acids from various peptides. In Sinorhizobium medicae (strain WSM419) (Ensifer medicae), this protein is Probable cytosol aminopeptidase.